We begin with the raw amino-acid sequence, 157 residues long: SsrA-binding protein (157 aa).

The disordered stretch occupies residues 132-157 (VHDKRQAQKDKDWAREKDRLFKKAYK). Basic and acidic residues predominate over residues 135 to 157 (KRQAQKDKDWAREKDRLFKKAYK).

It belongs to the SmpB family.

The protein resides in the cytoplasm. Its function is as follows. Required for rescue of stalled ribosomes mediated by trans-translation. Binds to transfer-messenger RNA (tmRNA), required for stable association of tmRNA with ribosomes. tmRNA and SmpB together mimic tRNA shape, replacing the anticodon stem-loop with SmpB. tmRNA is encoded by the ssrA gene; the 2 termini fold to resemble tRNA(Ala) and it encodes a 'tag peptide', a short internal open reading frame. During trans-translation Ala-aminoacylated tmRNA acts like a tRNA, entering the A-site of stalled ribosomes, displacing the stalled mRNA. The ribosome then switches to translate the ORF on the tmRNA; the nascent peptide is terminated with the 'tag peptide' encoded by the tmRNA and targeted for degradation. The ribosome is freed to recommence translation, which seems to be the essential function of trans-translation. The sequence is that of SsrA-binding protein from Francisella tularensis subsp. tularensis (strain FSC 198).